Here is a 247-residue protein sequence, read N- to C-terminus: MGGKKFGTNSKAEEARSKKAEVKKNENEKKQRDKEDKMWEETDTKILDKQKKQKEKEEKAREDAKKKQEAKELLQQEDKEIKERYGKPSDTKVTRFEIQQKRDKEQKQREKELASRPSDPRVVVVPTTTTTTTTTTTTTTGSDDHEEEDFNLEENMNHILREQRLKDGKDVIDARDINEAIGALSGNDGKEQHPERRMKAAFNAYEEENLPVLRKENPSLRLTQVKQLLWKNWLKAPENPFNQVGSQ.

The disordered stretch occupies residues 1–146; the sequence is MGGKKFGTNS…TTTTGSDDHE (146 aa). A coiled-coil region spans residues 8 to 85; it reads TNSKAEEARS…QEDKEIKERY (78 aa). Residues 11 to 114 are compositionally biased toward basic and acidic residues; it reads KAEEARSKKA…EQKQREKELA (104 aa). Residues 122-140 show a composition bias toward low complexity; it reads VVVVPTTTTTTTTTTTTTT.

The protein belongs to the CCDC124 family. As to quaternary structure, associates with translationally inactive ribosomes in the nonrotated state.

In terms of biological role, ribosome-binding protein involved in ribosome hibernation: associates with translationally inactive ribosomes and stabilizes the nonrotated conformation of the 80S ribosome, thereby promoting ribosome preservation and storage. The sequence is that of Coiled-coil domain-containing protein 124 homolog from Dictyostelium discoideum (Social amoeba).